We begin with the raw amino-acid sequence, 75 residues long: Small ribosomal subunit protein bS16c (75 aa).

This sequence belongs to the bacterial ribosomal protein bS16 family.

It is found in the plastid. The protein localises to the chloroplast. This is Small ribosomal subunit protein bS16c from Cyanidium caldarium (Red alga).